We begin with the raw amino-acid sequence, 458 residues long: Cysteine--tRNA ligase (458 aa).

Residue cysteine 29 coordinates Zn(2+). The 'HIGH' region signature appears at 31-41; that stretch reads MTVYDLCHLGH. Zn(2+) is bound by residues cysteine 213, histidine 238, and glutamate 242. Residues 270–274 carry the 'KMSKS' region motif; that stretch reads KMSKS. Lysine 273 is an ATP binding site.

Belongs to the class-I aminoacyl-tRNA synthetase family. As to quaternary structure, monomer. Zn(2+) serves as cofactor.

Its subcellular location is the cytoplasm. It carries out the reaction tRNA(Cys) + L-cysteine + ATP = L-cysteinyl-tRNA(Cys) + AMP + diphosphate. In Acidovorax ebreus (strain TPSY) (Diaphorobacter sp. (strain TPSY)), this protein is Cysteine--tRNA ligase.